Reading from the N-terminus, the 472-residue chain is NADH-quinone oxidoreductase subunit N (472 aa).

A run of 14 helical transmembrane segments spans residues 5–25, 36–56, 77–97, 103–123, 126–146, 158–178, 197–217, 229–249, 264–284, 292–309, 319–339, 363–383, 396–416, and 441–461; these read LLTT…IGLL, AYAA…QYGI, IFLV…DGLP, FYAL…ANDL, LYVG…YILG, LLLG…LYGL, LAIA…AVPF, PTPV…AVLV, WLTV…VVAI, MLAY…VGLM, ILFY…VATA, ASVM…AGFV, GVLW…YYYL, and LTVI…GPLA.

This sequence belongs to the complex I subunit 2 family. As to quaternary structure, NDH-1 is composed of 14 different subunits. Subunits NuoA, H, J, K, L, M, N constitute the membrane sector of the complex.

It is found in the cell membrane. It carries out the reaction a quinone + NADH + 5 H(+)(in) = a quinol + NAD(+) + 4 H(+)(out). NDH-1 shuttles electrons from NADH, via FMN and iron-sulfur (Fe-S) centers, to quinones in the respiratory chain. The immediate electron acceptor for the enzyme in this species is believed to be a menaquinone. Couples the redox reaction to proton translocation (for every two electrons transferred, four hydrogen ions are translocated across the cytoplasmic membrane), and thus conserves the redox energy in a proton gradient. The polypeptide is NADH-quinone oxidoreductase subunit N (Heliobacterium modesticaldum (strain ATCC 51547 / Ice1)).